The chain runs to 200 residues: Somatotropin (200 aa).

The N-terminal stretch at 1–22 (MARVLVVLSVVVASLFFSQGAT) is a signal peptide. H38 contacts Zn(2+). A disulfide bond links C71 and C173. E182 is a Zn(2+) binding site. A disulfide bridge links C190 with C198.

It belongs to the somatotropin/prolactin family.

It localises to the secreted. Functionally, growth hormone plays an important role in growth control and is involved in the regulation of several anabolic processes. Implicated as an osmoregulatory substance important for seawater adaptation. This is Somatotropin (gh) from Heteropneustes fossilis (Stinging catfish).